The following is a 265-amino-acid chain: Leucyl/phenylalanyl-tRNA--protein transferase (265 aa).

The disordered stretch occupies residues 244–265 (LDTGPDPASSSVTEISLRPAAP).

Belongs to the L/F-transferase family.

It localises to the cytoplasm. It carries out the reaction N-terminal L-lysyl-[protein] + L-leucyl-tRNA(Leu) = N-terminal L-leucyl-L-lysyl-[protein] + tRNA(Leu) + H(+). It catalyses the reaction N-terminal L-arginyl-[protein] + L-leucyl-tRNA(Leu) = N-terminal L-leucyl-L-arginyl-[protein] + tRNA(Leu) + H(+). The catalysed reaction is L-phenylalanyl-tRNA(Phe) + an N-terminal L-alpha-aminoacyl-[protein] = an N-terminal L-phenylalanyl-L-alpha-aminoacyl-[protein] + tRNA(Phe). Functions in the N-end rule pathway of protein degradation where it conjugates Leu, Phe and, less efficiently, Met from aminoacyl-tRNAs to the N-termini of proteins containing an N-terminal arginine or lysine. The chain is Leucyl/phenylalanyl-tRNA--protein transferase from Methylibium petroleiphilum (strain ATCC BAA-1232 / LMG 22953 / PM1).